A 329-amino-acid polypeptide reads, in one-letter code: Taste receptor type 2 member 102 (329 aa).

Residues M1–N9 are Extracellular-facing. Residues F10 to V30 form a helical membrane-spanning segment. Over L31 to D47 the chain is Cytoplasmic. The helical transmembrane segment at K48–F68 threads the bilayer. Over K69–I85 the chain is Extracellular. Residues I86–Y108 form a helical membrane-spanning segment. Topologically, residues L109–Q129 are cytoplasmic. A helical membrane pass occupies residues L130–M150. The Extracellular portion of the chain corresponds to L151–N181. N161 is a glycosylation site (N-linked (GlcNAc...) asparagine). The chain crosses the membrane as a helical span at residues M182–F202. Over S203–R231 the chain is Cytoplasmic. The chain crosses the membrane as a helical span at residues I232 to I252. Topologically, residues A253–D262 are extracellular. The helical transmembrane segment at I263–G283 threads the bilayer. The Cytoplasmic portion of the chain corresponds to N284–R329.

It belongs to the G-protein coupled receptor T2R family.

It is found in the membrane. In terms of biological role, putative taste receptor which may play a role in the perception of bitterness. The protein is Taste receptor type 2 member 102 of Mus musculus (Mouse).